The following is a 74-amino-acid chain: Large ribosomal subunit protein bL31 (74 aa).

Zn(2+)-binding residues include Cys-16, Cys-18, Cys-38, and Cys-41.

It belongs to the bacterial ribosomal protein bL31 family. Type A subfamily. Part of the 50S ribosomal subunit. The cofactor is Zn(2+).

Its function is as follows. Binds the 23S rRNA. This chain is Large ribosomal subunit protein bL31, found in Mycobacteroides abscessus (strain ATCC 19977 / DSM 44196 / CCUG 20993 / CIP 104536 / JCM 13569 / NCTC 13031 / TMC 1543 / L948) (Mycobacterium abscessus).